Here is an 810-residue protein sequence, read N- to C-terminus: MVMAYFVENFWGEKNSGFDVLYHNMKHGQISTKELADFVRERATIEEAYSRSMTKLAKSASNYSQLGTFAPVWDVFKTSTEKLANCHLDLVRKLQELIKEVQKYGEEQVKSHKKTKEEVAGTLEAVQTIQSITQALQKSKENYNAKCVEQERLKKEGATQREIEKAAVKSKKATDTYKLYVEKYALAKADFEQKMTETAQKFQDIEETHLIHIKEIIGSLSNAIKEIHLQIGQVHEEFINNMANTTVESLIQKFAESKGTGKERPGLIEFEECDTASAVEGIKPRKRKTFALPGIIKKEKDAESVECPDADSLNIPDVDEEGYSIKPETNQNDTKENHFYSSSDSDSEDEEPKKYRIEIKPMHPNNSHHTMASLDELKVSIGNITLSPAISRHSPVQMNRNLSNEELTKSKPSAPPNEKGTSDLLAWDPLFGPSLDSSSSSSLTSSSSARPTTPLSVGTIVPPPRPASRPKLTSGKLSGINEIPRPFSPPVTSNTSPPPAAPLARAESSSSISSSASLSAANTPTVGVSRGPSPVSLGNQDTLPVAVALTESVNAYFKGADPTKCIVKITGDMTMSFPSGIIKVFTSNPTPAVLCFRVKNISRLEQILPNAQLVFSDPSQCDSNTKDFWMNMQAVTVYLKKLSEQNPAASYYNVDVLKYQVSSNGIQSTPLNLATYWKCSASTTDLRVDYKYNPEAMVAPSVLSNIQVVVPVDGGVTNMQSLPPAIWNAEQMKAFWKLSSISEKSENGGSGSLRAKFDLSEGPSKPTTLAVQFLSEGSTLSGVDFELVGTGYRLSLIKKRFATGRYLADC.

The F-BAR domain maps to 3–250; the sequence is MAYFVENFWG…NMANTTVESL (248 aa). Residues 3-274 are mediates dimerization and binding to membranes enriched in Pi(4,5)-P2 and induces their tubulation; sequence MAYFVENFWG…PGLIEFEECD (272 aa). Residues 87 to 156 are a coiled coil; the sequence is HLDLVRKLQE…CVEQERLKKE (70 aa). Residue lysine 297 forms a Glycyl lysine isopeptide (Lys-Gly) (interchain with G-Cter in SUMO2) linkage. A disordered region spans residues 301-352; the sequence is DAESVECPDADSLNIPDVDEEGYSIKPETNQNDTKENHFYSSSDSDSEDEEP. Serine 312 bears the Phosphoserine mark. Threonine 385 bears the Phosphothreonine mark. Phosphoserine occurs at positions 387, 394, and 403. The segment at 404 to 537 is disordered; the sequence is NEELTKSKPS…VSRGPSPVSL (134 aa). Residues 433 to 456 are compositionally biased toward low complexity; it reads PSLDSSSSSSLTSSSSARPTTPLS. Serine 488, serine 493, serine 496, serine 508, serine 510, serine 511, and serine 533 each carry phosphoserine. Positions 502-521 are enriched in low complexity; it reads PLARAESSSSISSSASLSAA. Residues 521 to 810 form a mediates interaction with DAB2, EPS15, EPS15R and ITSN1 region; the sequence is ANTPTVGVSR…FATGRYLADC (290 aa). The 268-residue stretch at 542–809 folds into the MHD domain; the sequence is TLPVAVALTE…RFATGRYLAD (268 aa).

The protein belongs to the FCHO family. As to quaternary structure, homodimer; disulfide-linked. May form homotetramer. Interacts with AP2A1. Interacts with EPS15, EPS15R, ITSN1 and ITSN2; recruit those scaffolding proteins which in turn may interact with the adaptor protein complex AP-2 at the plasma membrane. Interacts with DAB2 (via DPF motifs); mediates LDL receptor/LDLR endocytosis. Ubiquitinated. Mainly undergoes monoubiquitination but also polyubiquitination.

The protein resides in the membrane. Its subcellular location is the clathrin-coated pit. In terms of biological role, functions in an early step of clathrin-mediated endocytosis. Has both a membrane binding/bending activity and the ability to recruit proteins essential to the formation of functional clathrin-coated pits. Has a lipid-binding activity with a preference for membranes enriched in phosphatidylserine and phosphoinositides (Pi(4,5) biphosphate) like the plasma membrane. Its membrane-bending activity might be important for the subsequent action of clathrin and adaptors in the formation of clathrin-coated vesicles. Involved in adaptor protein complex AP-2-dependent endocytosis of the transferrin receptor, it also functions in the AP-2-independent endocytosis of the LDL receptor. This chain is F-BAR domain only protein 2 (FCHO2), found in Homo sapiens (Human).